The sequence spans 1445 residues: Tensin-3 (1445 aa).

Residues 1–170 (MEEGHGLDLT…QFLSGLLSGS (170 aa)) enclose the Phosphatase tensin-type domain. The C2 tensin-type domain maps to 175–301 (ASPLFLHFVI…GKVELVFSAT (127 aa)). Position 323 is a phosphothreonine (Thr323). Phosphoserine occurs at positions 332 and 361. The disordered stretch occupies residues 358-421 (RKKSSSDPGI…GTRRGLSAQE (64 aa)). The span at 386–400 (TLSVSSDSGHSTASA) shows a compositional bias: polar residues. Residues Ser440 and Ser516 each carry the phosphoserine modification. The interval 538-568 (VPDLGLGMDGPYERERTFGSREPKQPQPLLR) is disordered. Residues 548-561 (PYERERTFGSREPK) show a composition bias toward basic and acidic residues. Residue Ser571 is modified to Phosphoserine. 2 disordered regions span residues 618–695 (DNPG…TLDI) and 717–769 (PTHM…QPLG). Phosphothreonine is present on Thr632. 4 positions are modified to phosphoserine: Ser649, Ser660, Ser687, and Ser690. Polar residues predominate over residues 723 to 733 (LGSQANGSVSP). Ser735 and Ser776 each carry phosphoserine. Residue Tyr780 is modified to Phosphotyrosine. Ser811, Ser866, and Ser901 each carry phosphoserine. 2 disordered regions span residues 859–981 (ALRH…TRKD) and 1076–1127 (GHSS…PHSG). Over residues 864 to 873 (PFSPPEPPLS) the composition is skewed to pro residues. Over residues 914–935 (ASSTPSFQQAFASSCTISSNGP) the composition is skewed to polar residues. Residues 1099 to 1109 (PEKKRASEGDR) are compositionally biased toward basic and acidic residues. The segment covering 1110–1127 (SLGSVSPSSSGFSSPHSG) has biased composition (low complexity). Phosphoserine occurs at positions 1149 and 1154. Positions 1172–1282 (WYKADISREQ…ALPCKLLIPE (111 aa)) constitute an SH2 domain. 2 positions are modified to phosphoserine: Ser1293 and Ser1441. A PTB domain is found at 1310–1444 (ACNVWYLNSV…SKVMIGSPKK (135 aa)).

This sequence belongs to the PTEN phosphatase protein family. In terms of assembly, interacts with EGFR; EGF promotes the interaction with EGFR. Interacts with PTK2/FAK1 and BCAR1. Tyrosine phosphorylation is critical for these interactions. Interacts with Rho GTPase-activating protein DLC1 and with the regulatory p85 subunit of the PI3K kinase complex; in resting cells, interacts (via C2 tensin-type domain) with DLC1 but, following growth factor stimulation, TNS3 is phosphorylated which leads to weakened interaction with DLC1 and enhanced interaction (via C2 tensin-type domain) with p85 while DLC1 interaction with PTEN increases. Interacts (when phosphorylated on the SH2 domain) with integrins ITGB1, ITGB3 and ITGB5 and with scaffolding protein PEAK1 (phosphorylated on 'Tyr-635'); mediates the association of PEAK1 with ITGB1, ITGB3 and ITGB5. Interacts (via N-terminus) with DOCK5 (via N-terminus); the interaction increases DOCK5 guanine nucleotide exchange activity towards Rac. Interacts with receptor tyrosine kinase MET. Post-translationally, phosphorylated on Ser/Thr and Tyr residues. Phosphorylated on Thr-323 in the C2-type tensin domain following EGF stimulation which changes its binding preference from DLC1 to the p85 regulatory subunit of the PI3K kinase complex. EGF induces tyrosine phosphorylation in a time- and dose-dependent manner. Phosphorylation of the SH2 domain enhances interaction with PEAK1. Expressed in umbilical vein endothelial cells, epithelial cells, and fibroblasts cells (at protein level). Highly expressed in thyroid, kidney and placenta. Low expression in heart, skeletal muscle, spleen, liver, and lung. Expressed at higher levels in tonsil-derived mesenchymal stem cells (MSCs) than in adipose tissue-derived MSCs or bone marrow-derived MSCs. Expressed in tumor endothelial cells. Expression seems to be down-regulated in thyroid tumor tissues and in anaplastic carcinomas.

It is found in the cell junction. The protein localises to the focal adhesion. Its subcellular location is the cell projection. It localises to the podosome. May act as a protein phosphatase and/or a lipid phosphatase. Involved in the dissociation of the integrin-tensin-actin complex. EGF activates TNS4 and down-regulates TNS3 which results in capping the tail of ITGB1. Increases DOCK5 guanine nucleotide exchange activity towards Rac and plays a role in osteoclast podosome organization. Enhances RHOA activation in the presence of DLC1. Required for growth factor-induced epithelial cell migration; growth factor stimulation induces TNS3 phosphorylation which changes its binding preference from DLC1 to the p85 regulatory subunit of the PI3K kinase complex, displacing PI3K inhibitor PTEN and resulting in translocation of the TNS3-p85 complex to the leading edge of migrating cells to promote RAC1 activation. Meanwhile, PTEN switches binding preference from p85 to DLC1 and the PTEN-DLC1 complex translocates to the posterior of migrating cells to activate RHOA. Acts as an adapter protein by bridging the association of scaffolding protein PEAK1 with integrins ITGB1, ITGB3 and ITGB5 which contributes to the promotion of cell migration. Controls tonsil-derived mesenchymal stem cell proliferation and differentiation by regulating the activity of integrin ITGB1. In Homo sapiens (Human), this protein is Tensin-3 (TNS3).